The chain runs to 321 residues: Glucokinase (321 aa).

8–13 (GDVGGT) is an ATP binding site.

Belongs to the bacterial glucokinase family.

Its subcellular location is the cytoplasm. It catalyses the reaction D-glucose + ATP = D-glucose 6-phosphate + ADP + H(+). This Tolumonas auensis (strain DSM 9187 / NBRC 110442 / TA 4) protein is Glucokinase.